The chain runs to 342 residues: Holliday junction branch migration complex subunit RuvB (342 aa).

The interval 2–181 (TDNPLLSSAS…FGIPVRLQFY (180 aa)) is large ATPase domain (RuvB-L). Positions 20, 21, 62, 65, 66, 67, 171, 181, and 218 each coordinate ATP. Thr-66 is a binding site for Mg(2+). Positions 182–252 (SVEELERVVA…IADNALTRLE (71 aa)) are small ATPAse domain (RuvB-S). Residues 255–342 (KIGLDLQDRR…QMPGLFGPDE (88 aa)) form a head domain (RuvB-H) region. DNA is bound by residues Arg-291, Arg-310, and Arg-315.

Belongs to the RuvB family. In terms of assembly, homohexamer. Forms an RuvA(8)-RuvB(12)-Holliday junction (HJ) complex. HJ DNA is sandwiched between 2 RuvA tetramers; dsDNA enters through RuvA and exits via RuvB. An RuvB hexamer assembles on each DNA strand where it exits the tetramer. Each RuvB hexamer is contacted by two RuvA subunits (via domain III) on 2 adjacent RuvB subunits; this complex drives branch migration. In the full resolvosome a probable DNA-RuvA(4)-RuvB(12)-RuvC(2) complex forms which resolves the HJ.

It localises to the cytoplasm. The catalysed reaction is ATP + H2O = ADP + phosphate + H(+). In terms of biological role, the RuvA-RuvB-RuvC complex processes Holliday junction (HJ) DNA during genetic recombination and DNA repair, while the RuvA-RuvB complex plays an important role in the rescue of blocked DNA replication forks via replication fork reversal (RFR). RuvA specifically binds to HJ cruciform DNA, conferring on it an open structure. The RuvB hexamer acts as an ATP-dependent pump, pulling dsDNA into and through the RuvAB complex. RuvB forms 2 homohexamers on either side of HJ DNA bound by 1 or 2 RuvA tetramers; 4 subunits per hexamer contact DNA at a time. Coordinated motions by a converter formed by DNA-disengaged RuvB subunits stimulates ATP hydrolysis and nucleotide exchange. Immobilization of the converter enables RuvB to convert the ATP-contained energy into a lever motion, pulling 2 nucleotides of DNA out of the RuvA tetramer per ATP hydrolyzed, thus driving DNA branch migration. The RuvB motors rotate together with the DNA substrate, which together with the progressing nucleotide cycle form the mechanistic basis for DNA recombination by continuous HJ branch migration. Branch migration allows RuvC to scan DNA until it finds its consensus sequence, where it cleaves and resolves cruciform DNA. The chain is Holliday junction branch migration complex subunit RuvB from Novosphingobium aromaticivorans (strain ATCC 700278 / DSM 12444 / CCUG 56034 / CIP 105152 / NBRC 16084 / F199).